The following is a 351-amino-acid chain: Nuclear inhibitor of protein phosphatase 1 (351 aa).

Residues 1–142 are interaction with CDC5L, SF3B1 and MELK; sequence MAAAANSGSS…LPSAVKGDEK (142 aa). Residues 49-101 enclose the FHA domain; it reads YLFGRNPDLCDFTIDHQSCSRVHAALVYHKHLKRVFLIDLNSTHGTFLGHIRL. The interaction with EED stretch occupies residues 143-224; the sequence is MGGEDDELKG…VDPSVGRFRN (82 aa). Thr-161 carries the phosphothreonine modification. Ser-178 and Ser-199 each carry phosphoserine. 2 short sequence motifs (nuclear localization signal) span residues 185–209 and 210–240; these read GNLD…DDEI and INPE…RVEG. Positions 191–200 are involved in PP-1 inhibition; that stretch reads RPKRKRKNSR. The segment at 200–203 is involved in PP-1 binding; the sequence is RVTF. Residue Ser-204 is modified to Phosphoserine. Residue Ser-249 is modified to Phosphoserine. Tyr-264 carries the post-translational modification Phosphotyrosine; by LYN; in vitro. The interaction with EED stretch occupies residues 310-329; it reads AVNMNPAPNPAVYNPEAVNE. The segment at 316–351 is disordered; it reads APNPAVYNPEAVNEPKKKKYAKEAWPGKKPTPSLLI. Residues 330-351 are RNA-binding; that stretch reads PKKKKYAKEAWPGKKPTPSLLI. The interval 331–337 is involved in PP-1 inhibition; that stretch reads KKKKYAK. Tyr-335 bears the Phosphotyrosine mark.

As to quaternary structure, interacts with phosphorylated CDC5L, SF3B1 and MELK. Interacts with EED, in a nucleic acid-stimulated manner. Part of a complex consisting of PPP1R8, EED, HDAC2 and PP-1. Part of the spliceosome. Interacts with PPP1CA, PPP1CB and PPP1CC. Requires Mg(2+) as cofactor. In terms of processing, may be inactivated by phosphorylation on Ser-199 or Ser-204. Phosphorylated by Lyn in vitro on Tyr-264, and also on Tyr-335 in the presence of RNA. As to expression, ubiquitously expressed, with highest levels in heart and skeletal muscle, followed by brain, placenta, lung, liver and pancreas. Less abundant in kidney. The concentration and ratio between isoforms is cell-type dependent. Isoform Alpha (&gt;90%) and isoform Beta were found in brain, heart and kidney. Isoform Gamma is mainly found in B-cells and T-lymphocytes, and has been found in 293 embryonic kidney cells.

The protein localises to the nucleus. It is found in the nucleus speckle. The protein resides in the cytoplasm. In terms of biological role, inhibitor subunit of the major nuclear protein phosphatase-1 (PP-1). It has RNA-binding activity but does not cleave RNA and may target PP-1 to RNA-associated substrates. May also be involved in pre-mRNA splicing. Binds DNA and might act as a transcriptional repressor. Seems to be required for cell proliferation. Its function is as follows. Isoform Gamma is a site-specific single-strand endoribonuclease that cleaves single strand RNA 3' to purines and pyrimidines in A+U-rich regions. It generates 5'-phosphate termini at the site of cleavage. This isoform does not inhibit PP-1. May be implicated in mRNA splicing. In Homo sapiens (Human), this protein is Nuclear inhibitor of protein phosphatase 1 (PPP1R8).